The sequence spans 117 residues: Large ribosomal subunit protein bL20 (117 aa).

It belongs to the bacterial ribosomal protein bL20 family.

Its function is as follows. Binds directly to 23S ribosomal RNA and is necessary for the in vitro assembly process of the 50S ribosomal subunit. It is not involved in the protein synthesizing functions of that subunit. This Actinobacillus pleuropneumoniae serotype 7 (strain AP76) protein is Large ribosomal subunit protein bL20.